Reading from the N-terminus, the 118-residue chain is V-type proton ATPase subunit G 3 (118 aa).

The segment at 1–34 (MTSQSQGIHQLLQAEKRAKDKLEEAKKRKGKRLK) is disordered. A coiled-coil region spans residues 5-54 (SQGIHQLLQAEKRAKDKLEEAKKRKGKRLKQAKEEAMVEIDQYRMQRDKE). Residues 14 to 26 (AEKRAKDKLEEAK) are compositionally biased toward basic and acidic residues.

It belongs to the V-ATPase G subunit family. V-ATPase is a heteromultimeric enzyme made up of two complexes: the ATP-hydrolytic V1 complex and the proton translocation V0 complex. The V1 complex consists of three catalytic AB heterodimers that form a heterohexamer, three peripheral stalks each consisting of EG heterodimers, one central rotor including subunits D and F, and the regulatory subunits C and H. The proton translocation complex V0 consists of the proton transport subunit a, a ring of proteolipid subunits c9c'', rotary subunit d, subunits e and f, and the accessory subunits ATP6AP1/Ac45 and ATP6AP2/PRR. As to expression, kidney.

Subunit of the V1 complex of vacuolar(H+)-ATPase (V-ATPase), a multisubunit enzyme composed of a peripheral complex (V1) that hydrolyzes ATP and a membrane integral complex (V0) that translocates protons. V-ATPase is responsible for acidifying and maintaining the pH of intracellular compartments and in some cell types, is targeted to the plasma membrane, where it is responsible for acidifying the extracellular environment. This is V-type proton ATPase subunit G 3 (ATP6V1G3) from Homo sapiens (Human).